The following is a 135-amino-acid chain: Phosphoribosyl-AMP cyclohydrolase (135 aa).

Aspartate 78 is a binding site for Mg(2+). Cysteine 79 contacts Zn(2+). Mg(2+) contacts are provided by aspartate 80 and aspartate 82. 2 residues coordinate Zn(2+): cysteine 96 and cysteine 103.

The protein belongs to the PRA-CH family. Homodimer. It depends on Mg(2+) as a cofactor. Requires Zn(2+) as cofactor.

Its subcellular location is the cytoplasm. It catalyses the reaction 1-(5-phospho-beta-D-ribosyl)-5'-AMP + H2O = 1-(5-phospho-beta-D-ribosyl)-5-[(5-phospho-beta-D-ribosylamino)methylideneamino]imidazole-4-carboxamide. Its pathway is amino-acid biosynthesis; L-histidine biosynthesis; L-histidine from 5-phospho-alpha-D-ribose 1-diphosphate: step 3/9. In terms of biological role, catalyzes the hydrolysis of the adenine ring of phosphoribosyl-AMP. In Cupriavidus metallidurans (strain ATCC 43123 / DSM 2839 / NBRC 102507 / CH34) (Ralstonia metallidurans), this protein is Phosphoribosyl-AMP cyclohydrolase.